The primary structure comprises 271 residues: Orotidine 5'-phosphate decarboxylase (271 aa).

The Proton donor role is filled by lysine 97.

This sequence belongs to the OMP decarboxylase family. Type 2 subfamily.

It catalyses the reaction orotidine 5'-phosphate + H(+) = UMP + CO2. It participates in pyrimidine metabolism; UMP biosynthesis via de novo pathway; UMP from orotate: step 2/2. The polypeptide is Orotidine 5'-phosphate decarboxylase (Leptospira borgpetersenii serovar Hardjo-bovis (strain JB197)).